Here is a 396-residue protein sequence, read N- to C-terminus: Putative pyridoxal phosphate-dependent acyltransferase (396 aa).

A pyridoxal 5'-phosphate-binding site is contributed by 111 to 112 (GF). His-136 contributes to the substrate binding site. Residues Ser-186, 211–214 (DDAH), and 241–244 (TLSK) each bind pyridoxal 5'-phosphate. At Lys-244 the chain carries N6-(pyridoxal phosphate)lysine. Thr-358 serves as a coordination point for substrate.

The protein belongs to the class-II pyridoxal-phosphate-dependent aminotransferase family. Homodimer. Pyridoxal 5'-phosphate serves as cofactor.

The sequence is that of Putative pyridoxal phosphate-dependent acyltransferase from Bacillus cereus (strain ATCC 14579 / DSM 31 / CCUG 7414 / JCM 2152 / NBRC 15305 / NCIMB 9373 / NCTC 2599 / NRRL B-3711).